A 256-amino-acid chain; its full sequence is 6-carboxyhexanoate--CoA ligase (256 aa).

The protein belongs to the BioW family. As to quaternary structure, homodimer. Mg(2+) is required as a cofactor.

The enzyme catalyses heptanedioate + ATP + CoA = 6-carboxyhexanoyl-CoA + AMP + diphosphate. The protein operates within metabolic intermediate metabolism; pimeloyl-CoA biosynthesis; pimeloyl-CoA from pimelate: step 1/1. Catalyzes the transformation of pimelate into pimeloyl-CoA with concomitant hydrolysis of ATP to AMP. This chain is 6-carboxyhexanoate--CoA ligase, found in Bacillus amyloliquefaciens (strain ATCC 23350 / DSM 7 / BCRC 11601 / CCUG 28519 / NBRC 15535 / NRRL B-14393 / F).